We begin with the raw amino-acid sequence, 272 residues long: Transcription factor GAL1 (272 aa).

Positions 1–10 (MAGKNMSSRL) are enriched in polar residues. Disordered stretches follow at residues 1-49 (MAGK…SPET), 102-215 (YGAI…SRDI), and 246-272 (KGHL…AMDY). 2 stretches are compositionally biased toward acidic residues: residues 113–122 (ESDDDQDEEQ) and 152–174 (SEQD…DEAE). Over residues 175–215 (LLIKAERKEAAAKLRAERKAQRKADEVKSKQMAERRRSRDI) the composition is skewed to basic and acidic residues. The CCHC-type zinc-finger motif lies at 240–255 (CHVCGQKGHLQKDCPD).

Its subcellular location is the nucleus. Functionally, transcription factor; part of the gene cluster that mediates the biosynthesis of liamocins, glycolipids (also called heavy oils) composed of a single mannitol or arabitol headgroup linked to either three, four or even six 3,5-dihydroxydecanoic ester tail-groups. Positively regulates the expression of PKS1 and EST1 that mediate the biosynthesis of liamocins. This Aureobasidium melanogenum (Aureobasidium pullulans var. melanogenum) protein is Transcription factor GAL1.